A 375-amino-acid chain; its full sequence is FK506-binding protein 4 (375 aa).

2 disordered regions span residues 55 to 78 (GFED…EEEI) and 127 to 265 (PPDF…SKMT). 2 stretches are compositionally biased toward acidic residues: residues 56–66 (FEDDYDEEEQE) and 131–173 (FDQD…DPDR). Residues 196 to 216 (DSKKRAAEKPVKETAAKKLKA) are compositionally biased toward basic and acidic residues. The segment covering 217-230 (DASAASAASTPTKA) has biased composition (low complexity). A compositionally biased stretch (basic and acidic residues) spans 231–261 (IETKGEKQTKGAKDTKPKSETVEKKTVDKST). The 87-residue stretch at 289–375 (GQKVGMRYVG…VFDVKLVEIK (87 aa)) folds into the PPIase FKBP-type domain.

It belongs to the FKBP-type PPIase family. FKBP3/4 subfamily. As to quaternary structure, binds to histones H3 and H4.

It localises to the nucleus. The catalysed reaction is [protein]-peptidylproline (omega=180) = [protein]-peptidylproline (omega=0). Its activity is regulated as follows. Inhibited by both FK506 and rapamycin. Functionally, PPIase that acts as a histone chaperone. Histone proline isomerase that increases the rate of cis-trans isomerization at prolines on the histone H3 N-terminal tail. Proline isomerization influences H3 methylation thereby regulating gene expression. The sequence is that of FK506-binding protein 4 (FPR4) from Mycosarcoma maydis (Corn smut fungus).